Reading from the N-terminus, the 414-residue chain is Glyco-Gag protein (414 aa).

The Cytoplasmic segment spans residues 1-51 (MSGASSGTAIGAHLFGVSPECRVLIGDEGAGPSKSLSEVSFSVWYQSRAAR). The chain crosses the membrane as a helical span at residues 52 to 72 (LVIFCLVASFLVPCLTFLIAE). Topologically, residues 73–414 (TVMGQTIATP…TNLAQVKQVV (342 aa)) are extracellular. N-linked (GlcNAc...) asparagine; by host glycosylation occurs at Asn134. Residues 171–282 (VRPFLPPPKP…LREGPNNRPQ (112 aa)) are disordered. Residues 174–193 (FLPPPKPPTPLPQPLSPQPS) show a composition bias toward pro residues. The segment covering 194 to 206 (APLTSSLYPVLPK) has biased composition (low complexity). The span at 210 to 220 (PKPPVLPPDPS) shows a compositional bias: pro residues.

Post-translationally, glycosylated by host. Cleaved by host near the middle of the molecule, releasing the c-terminal half containing capsid and nucleoprotein domains op GAG.

The protein resides in the host cell membrane. Functionally, plays a role in viral particle release. Presumably acts by facilitating the fission of the virion bud at the cell surface. This chain is Glyco-Gag protein, found in Felidae (cat family).